Consider the following 902-residue polypeptide: Methionine--tRNA ligase, cytoplasmic (902 aa).

The 139-residue stretch at 74-212 folds into the GST C-terminal domain; the sequence is GWEQDDLTNQ…QKQPQPQPPP (139 aa). The 'HIGH' region signature appears at 275–285; the sequence is PYVNNVPHLGN. Positions 595–599 match the 'KMSKS' region motif; sequence KFSKS. K598 is a binding site for ATP. The residue at position 827 (S827) is a Phosphoserine. At T837 the chain carries Phosphothreonine. Positions 843–899 constitute a WHEP-TRS domain; the sequence is HIQTLTDEVTKQGNVVRELKAQKADKNQVAAEVAKLLDLKKQLALAEGKPIETPKGK.

It belongs to the class-I aminoacyl-tRNA synthetase family. Monomer. Part of a multisubunit complex that groups tRNA ligases for Arg (RARS1), Asp (DARS1), Gln (QARS1), Ile (IARS1), Leu (LARS1), Lys (KARS1), Met (MARS1) the bifunctional ligase for Glu and Pro (EPRS1) and the auxiliary subunits AIMP1/p43, AIMP2/p38 and EEF1E1/p18. Forms a linear complex that contains MARS1, EEF1E1, EPRS1 and AIMP2 that is at the core of the multisubunit complex.

The protein resides in the cytoplasm. It is found in the cytosol. It localises to the nucleus. The protein localises to the nucleolus. The catalysed reaction is tRNA(Met) + L-methionine + ATP = L-methionyl-tRNA(Met) + AMP + diphosphate. In terms of biological role, catalyzes the specific attachment of an amino acid to its cognate tRNA in a 2 step reaction: the amino acid (AA) is first activated by ATP to form AA-AMP and then transferred to the acceptor end of the tRNA. Plays a role in the synthesis of ribosomal RNA in the nucleolus. The sequence is that of Methionine--tRNA ligase, cytoplasmic (Mars1) from Mus musculus (Mouse).